The sequence spans 367 residues: Chorismate synthase (367 aa).

Residue Arg48 coordinates NADP(+). FMN-binding positions include 125–127 (RSS), 243–244 (NA), Gly283, 298–302 (KPTSS), and Arg324.

It belongs to the chorismate synthase family. Homotetramer. FMNH2 is required as a cofactor.

The enzyme catalyses 5-O-(1-carboxyvinyl)-3-phosphoshikimate = chorismate + phosphate. It participates in metabolic intermediate biosynthesis; chorismate biosynthesis; chorismate from D-erythrose 4-phosphate and phosphoenolpyruvate: step 7/7. Functionally, catalyzes the anti-1,4-elimination of the C-3 phosphate and the C-6 proR hydrogen from 5-enolpyruvylshikimate-3-phosphate (EPSP) to yield chorismate, which is the branch point compound that serves as the starting substrate for the three terminal pathways of aromatic amino acid biosynthesis. This reaction introduces a second double bond into the aromatic ring system. The chain is Chorismate synthase from Psychrobacter sp. (strain PRwf-1).